Consider the following 174-residue polypeptide: MMRVIILLLTLHVLGVSSVMSLKKKIDGPWQTIYLAASTMEKINEGSPLRTYFRHILCGRRCNQVYLYFFIKKGTKCQLYKVIGRKKQEVYYAQYEGSIAFMLKMVNEKILLFHYFNKNRRNDVTRVAGVLAKGKQLNKEEMTEFMNLVEEMGIEEENVQRIMDTDNCPSKIKP.

An N-terminal signal peptide occupies residues 1–18; it reads MMRVIILLLTLHVLGVSS. Cys77 and Cys168 are oxidised to a cystine.

It belongs to the calycin superfamily. Lipocalin family.

It localises to the secreted. This is Probasin (Pbsn) from Mus musculus (Mouse).